The sequence spans 151 residues: UPF0208 membrane protein ECA3038 (151 aa).

2 consecutive transmembrane segments (helical) span residues 46 to 66 and 69 to 89; these read FGIRIMPPLAVFTLTWQIALG and LGPAIATALFACSLPLQGLWW.

This sequence belongs to the UPF0208 family.

Its subcellular location is the cell inner membrane. This chain is UPF0208 membrane protein ECA3038, found in Pectobacterium atrosepticum (strain SCRI 1043 / ATCC BAA-672) (Erwinia carotovora subsp. atroseptica).